The sequence spans 1121 residues: Peroxisomal ATPase PEX1 (1121 aa).

Disordered stretches follow at residues 187 to 221 (SISS…NNGE) and 1099 to 1121 (SGRD…STLM). The segment covering 205–217 (SSTSTATGRRSVT) has biased composition (low complexity).

Belongs to the AAA ATPase family. Interacts with PEX6; forming the PEX1-PEX6 AAA ATPase complex, which is composed of a heterohexamer formed by a trimer of PEX1-PEX6 dimers.

The protein localises to the membrane. The enzyme catalyses ATP + H2O = ADP + phosphate + H(+). Component of the PEX1-PEX6 AAA ATPase complex involved in peroxisome biosynthesis. The complex acts as a protein dislocase complex that mediates the ATP-dependent extraction of the PEX5 receptor from peroxisomal membranes, an essential step for PEX5 recycling. Specifically recognizes PEX5 monoubiquitinated at 'Cys-6', and pulls it out of the peroxisome lumen through the PEX2-PEX10-PEX12 retrotranslocation channel. Extraction by the PEX1-PEX6 AAA ATPase complex is accompanied by unfolding of the TPR repeats and release of bound cargo from PEX5. This is Peroxisomal ATPase PEX1 from Komagataella phaffii (strain GS115 / ATCC 20864) (Yeast).